The following is a 379-amino-acid chain: Dual-specificity RNA methyltransferase RlmN (379 aa).

Glutamate 95 (proton acceptor) is an active-site residue. The Radical SAM core domain maps to 101–345 (EETRGTLCVS…TTVRKTRGDD (245 aa)). Cysteine 108 and cysteine 350 are oxidised to a cystine. 3 residues coordinate [4Fe-4S] cluster: cysteine 115, cysteine 119, and cysteine 122. Residues 176-177 (GE), serine 208, 230-232 (SLH), and asparagine 307 each bind S-adenosyl-L-methionine. The active-site S-methylcysteine intermediate is cysteine 350.

Belongs to the radical SAM superfamily. RlmN family. The cofactor is [4Fe-4S] cluster.

It localises to the cytoplasm. It carries out the reaction adenosine(2503) in 23S rRNA + 2 reduced [2Fe-2S]-[ferredoxin] + 2 S-adenosyl-L-methionine = 2-methyladenosine(2503) in 23S rRNA + 5'-deoxyadenosine + L-methionine + 2 oxidized [2Fe-2S]-[ferredoxin] + S-adenosyl-L-homocysteine. The catalysed reaction is adenosine(37) in tRNA + 2 reduced [2Fe-2S]-[ferredoxin] + 2 S-adenosyl-L-methionine = 2-methyladenosine(37) in tRNA + 5'-deoxyadenosine + L-methionine + 2 oxidized [2Fe-2S]-[ferredoxin] + S-adenosyl-L-homocysteine. In terms of biological role, specifically methylates position 2 of adenine 2503 in 23S rRNA and position 2 of adenine 37 in tRNAs. m2A2503 modification seems to play a crucial role in the proofreading step occurring at the peptidyl transferase center and thus would serve to optimize ribosomal fidelity. The polypeptide is Dual-specificity RNA methyltransferase RlmN (Burkholderia lata (strain ATCC 17760 / DSM 23089 / LMG 22485 / NCIMB 9086 / R18194 / 383)).